Consider the following 334-residue polypeptide: Mucin-15 (334 aa).

The N-terminal stretch at 1 to 23 is a signal peptide; the sequence is MLALAKILLISTLFYSLLSGSHG. The Extracellular portion of the chain corresponds to 24-236; the sequence is KENQDINTTQ…SDPQKENRNT (213 aa). 9 N-linked (GlcNAc...) asparagine glycosylation sites follow: Asn-30, Asn-61, Asn-79, Asn-90, Asn-148, Asn-155, Asn-163, Asn-218, and Asn-225. The interval 64-104 is disordered; that stretch reads TSNLKASHSPPLNLPNNSHGITDFSSNSSAEHSLGSLKPTS. A compositionally biased stretch (polar residues) spans 77–94; it reads LPNNSHGITDFSSNSSAE. Residues 237 to 257 form a helical membrane-spanning segment; it reads GIVFGAILGAILGVSLLTLVG. Topologically, residues 258-334 are cytoplasmic; that stretch reads YLLCGKRKTD…DDIPPLRTSV (77 aa). The disordered stretch occupies residues 304–334; that stretch reads PTLNDSAMPESEENARDGIPMDDIPPLRTSV.

Highly glycosylated (N- and O-linked carbohydrates). As to expression, expressed in spleen, thymus, prostate, testis, ovary, small intestine, colon, peripheral blood leukocyte, bone marrow, lymph node and lung.

Its subcellular location is the cell membrane. The protein localises to the secreted. Functionally, may play a role in the cell adhesion to the extracellular matrix. This is Mucin-15 (MUC15) from Homo sapiens (Human).